The chain runs to 712 residues: Potassium transporter 1 (712 aa).

Topologically, residues 1 to 19 (MNQSPSLIEQGISQQHLKT) are cytoplasmic. Residues 20-40 (LSCANVLTLAYQSLGVIYGDL) traverse the membrane as a helical segment. Residues 41–67 (STSPLYVYKTTFSGKLSLHEDDEEIFG) are Extracellular-facing. Residues 68 to 88 (VFSFIFWTFTLIALFKYVFIV) form a helical membrane-spanning segment. Over 89–154 (LSADDNGEGG…FFEKHPKSQK (66 aa)) the chain is Cytoplasmic. A helical transmembrane segment spans residues 155 to 175 (CLLLFVLLGTCMAIGDSVLTP). Residues 176 to 189 (TISVLSAVSGVKLK) are Extracellular-facing. A helical membrane pass occupies residues 190-210 (IPNLHENYVVIIACIILVAIF). The Cytoplasmic segment spans residues 211–219 (SVQRYGTHR). A helical transmembrane segment spans residues 220 to 240 (VAFIFAPISTAWLLSISSIGV). Over 241-267 (YNTIKWNPRIVSALSPVYMYKFLRSTG) the chain is Extracellular. The helical transmembrane segment at 268-288 (VEGWVSLGGVVLSITGVETMF) threads the bilayer. Residues 289–300 (ADLGHFSSLSIK) lie on the Cytoplasmic side of the membrane. Residues 301-321 (VAFSFFVYPCLILAYMGEAAF) traverse the membrane as a helical segment. The Extracellular portion of the chain corresponds to 322 to 340 (LSKHHEDIQQSFYKAIPEP). The chain crosses the membrane as a helical span at residues 341 to 361 (VFWPVFIVATFAAVVGSQAVI). Topologically, residues 362 to 392 (SATFSIISQCCALDCFPRVKIIHTSSKIHGQ) are cytoplasmic. A helical membrane pass occupies residues 393-413 (IYIPEVNWMLMCLCLAVTIGL). The Extracellular segment spans residues 414 to 424 (RDTNMMGHAYG). A helical transmembrane segment spans residues 425–445 (LAVTSVMLVTTCLMTLVMTIV). Topologically, residues 446-449 (WKQR) are cytoplasmic. Residues 450–470 (IITVLAFVVFFGSIELLYFSS) form a helical membrane-spanning segment. The Extracellular portion of the chain corresponds to 471–474 (CVYK). The chain crosses the membrane as a helical span at residues 475–495 (VPEGGWIPILLSLTFMAVMYI). The Cytoplasmic portion of the chain corresponds to 496–712 (WNYGTTKKHE…LLEVGMVYYV (217 aa)).

The protein belongs to the HAK/KUP transporter (TC 2.A.72.3) family. In terms of tissue distribution, detected in the whole mature plant but preferentially expressed in roots and stems, and in potassium-starved plants.

The protein localises to the cell membrane. In terms of biological role, high-affinity potassium transporter that could play a major role in the uptake of potassium from the rhizosphere. May act as a low-affinity potassium transporter under high potassium concentrations. Could also transport rubidium. The sequence is that of Potassium transporter 1 (POT1) from Arabidopsis thaliana (Mouse-ear cress).